The chain runs to 350 residues: ADP-ribose pyrophosphatase, mitochondrial (350 aa).

The transit peptide at 1–46 (MAGRSLGKAVATVSLSVALASVTVRSSGCRAIPAPRNPFPSCGFHL) directs the protein to the mitochondrion. 2 disordered regions span residues 53-77 (GSNGVKDNSHNKARTSPYPGSKVER) and 116-153 (SESSFSPRFNEKDGHVERKSQNGLYEIENGRPRNPAGR). Phosphoserine is present on Ser121. Basic and acidic residues predominate over residues 124–135 (FNEKDGHVERKS). The 157-residue stretch at 178–334 (WKRDESGNKI…SQFIKLVAEK (157 aa)) folds into the Nudix hydrolase domain. The short motif at 215–237 (GMVDPGEKISATLKREFGEEALN) is the Nudix box element.

The protein belongs to the Nudix hydrolase family. NudF subfamily. As to quaternary structure, monomer. Interacts with GLOD4. It depends on Mg(2+) as a cofactor. Mn(2+) serves as cofactor.

The protein localises to the mitochondrion. It catalyses the reaction ADP-D-ribose + H2O = D-ribose 5-phosphate + AMP + 2 H(+). Functionally, hydrolyzes ADP-ribose (ADPR) to AMP and ribose 5'-phosphate. The chain is ADP-ribose pyrophosphatase, mitochondrial (Nudt9) from Rattus norvegicus (Rat).